Here is a 318-residue protein sequence, read N- to C-terminus: Ubiquitin-like domain-containing CTD phosphatase 1 (318 aa).

The residue at position 2 (alanine 2) is an N-acetylalanine. The region spanning 3–81 is the Ubiquitin-like domain; the sequence is LPIIVKWGGQ…IMMMGTREES (79 aa). At lysine 117 the chain carries N6-acetyllysine. Residues 133–294 enclose the FCP1 homology domain; sequence PREGKKLLVL…LKLTQYLKEI (162 aa). Mg(2+)-binding residues include aspartate 143, aspartate 145, and aspartate 253.

Requires Mg(2+) as cofactor.

Its subcellular location is the nucleus. It carries out the reaction O-phospho-L-seryl-[protein] + H2O = L-seryl-[protein] + phosphate. The catalysed reaction is O-phospho-L-threonyl-[protein] + H2O = L-threonyl-[protein] + phosphate. Functionally, dephosphorylates 26S nuclear proteasomes, thereby decreasing their proteolytic activity. Recruited to the 19S regulatory particle of the 26S proteasome through its interaction with 19S component PSMD2/RPN1. Once recruited, dephosphorylates 19S component PSMC2/RPT1 which impairs PSMC2 ATPase activity and disrupts 26S proteasome assembly. Has also been reported to stimulate the proteolytic activity of the 26S proteasome. The sequence is that of Ubiquitin-like domain-containing CTD phosphatase 1 (UBLCP1) from Bos taurus (Bovine).